The chain runs to 1058 residues: Carbamoyl phosphate synthase large chain (1058 aa).

The carboxyphosphate synthetic domain stretch occupies residues 1 to 401 (MSKRKDIQKI…SLLKACRSLE (401 aa)). ATP-binding residues include Arg-129, Arg-169, Gly-175, Gly-176, Arg-208, Ile-210, Glu-215, Gly-241, Ile-242, His-243, Gln-284, and Glu-298. The 195-residue stretch at 133-327 (KQLMQELDQP…IAKLAAKIAV (195 aa)) folds into the ATP-grasp 1 domain. Mg(2+) is bound by residues Gln-284, Glu-298, and Asn-300. Gln-284, Glu-298, and Asn-300 together coordinate Mn(2+). The oligomerization domain stretch occupies residues 402–546 (IGVCHNEMTS…YSTYELENES (145 aa)). Residues 547-929 (VQSNKESILV…ALYKAFEANN (383 aa)) form a carbamoyl phosphate synthetic domain region. One can recognise an ATP-grasp 2 domain in the interval 671–861 (EKALKELGIP…MAQIATKLIL (191 aa)). Positions 707, 746, 748, 752, 777, 778, 779, 780, 820, and 832 each coordinate ATP. Residues Gln-820, Glu-832, and Asn-834 each contribute to the Mg(2+) site. Mn(2+) is bound by residues Gln-820, Glu-832, and Asn-834. In terms of domain architecture, MGS-like spans 930–1058 (SHLSEFGQIV…ESRCFNIEAI (129 aa)). An allosteric domain region spans residues 930–1058 (SHLSEFGQIV…ESRCFNIEAI (129 aa)).

It belongs to the CarB family. In terms of assembly, composed of two chains; the small (or glutamine) chain promotes the hydrolysis of glutamine to ammonia, which is used by the large (or ammonia) chain to synthesize carbamoyl phosphate. Tetramer of heterodimers (alpha,beta)4. Mg(2+) is required as a cofactor. It depends on Mn(2+) as a cofactor.

The enzyme catalyses hydrogencarbonate + L-glutamine + 2 ATP + H2O = carbamoyl phosphate + L-glutamate + 2 ADP + phosphate + 2 H(+). The catalysed reaction is hydrogencarbonate + NH4(+) + 2 ATP = carbamoyl phosphate + 2 ADP + phosphate + 2 H(+). It functions in the pathway amino-acid biosynthesis; L-arginine biosynthesis; carbamoyl phosphate from bicarbonate: step 1/1. The protein operates within pyrimidine metabolism; UMP biosynthesis via de novo pathway; (S)-dihydroorotate from bicarbonate: step 1/3. Its function is as follows. Large subunit of the glutamine-dependent carbamoyl phosphate synthetase (CPSase). CPSase catalyzes the formation of carbamoyl phosphate from the ammonia moiety of glutamine, carbonate, and phosphate donated by ATP, constituting the first step of 2 biosynthetic pathways, one leading to arginine and/or urea and the other to pyrimidine nucleotides. The large subunit (synthetase) binds the substrates ammonia (free or transferred from glutamine from the small subunit), hydrogencarbonate and ATP and carries out an ATP-coupled ligase reaction, activating hydrogencarbonate by forming carboxy phosphate which reacts with ammonia to form carbamoyl phosphate. The sequence is that of Carbamoyl phosphate synthase large chain from Streptococcus pyogenes serotype M5 (strain Manfredo).